We begin with the raw amino-acid sequence, 387 residues long: Transmembrane protein 120 homolog (387 aa).

A coiled-coil region spans residues 1–39; the sequence is MNIDSLKNEWEELNKEFAELESCNRRYIELLEQLHSHQQ. The N-linked (GlcNAc...) asparagine glycan is linked to asparagine 111. A run of 6 helical transmembrane segments spans residues 130–150, 155–175, 191–211, 216–238, 264–284, and 302–322; these read FKLILNVIGLIMAFFNLIFNY, LAFIFLLVWYYCTLTIRESIL, FISTVAAGVLLVWPQGEHWQI, FMYFNVYISIVQYLQFGYQKGLL, GLSFLLPFLFIGYGYQAYNAW, and VMSGLFLLLFVGNMATTLWVV. A disordered region spans residues 346–387; the sequence is RKEMKNSASDLDLSSGSKLSPTATTTTSIATATQTPAEKKET. A phosphoserine mark is found at serine 352, serine 354, and serine 365. Positions 352-381 are enriched in low complexity; sequence SASDLDLSSGSKLSPTATTTTSIATATQTP.

This sequence belongs to the TMEM120 family.

Its subcellular location is the membrane. This chain is Transmembrane protein 120 homolog, found in Drosophila melanogaster (Fruit fly).